Consider the following 503-residue polypeptide: MKKNTIILVGALIAIAFMTYMLLSINTRKTEQVLLNTTPVIKEKGVEARSDIWGKEYPRQYDTWKKTKDSNKIEDMVEKYPQLAILWAGYGFAKDYNAPRGHFNALQSNINTLRTGAPTGPNDGPMPMACWSCKSSDVPRIMERDGELQYFTGKWARMGSEIVNPIGCADCHNSQTSQLEISRPYLKRGLEASGRKLEDLTFQDMRSLACAQCHSEYYFKKTPYTDEAGNKQVAAVVTFPWAKGLAAENMEEYYNEYGFKDWTHGISKTPMLKAQHPGYEIFTTGIHFKRGLSCADCHMPYTQEGSVKFSDHQIQDPLNNIANSCLTCHRQSEEEFKQIVEEKLKRKDQLNVIAMNSLANAHLLAKKAWEVGATEAEMEKPINTIRSAQWLWDYSIASHGSFFHAPGETLRLLGVANNKAMQARLELQNILANHGVTDYEVPDFSTKEKAQKLAGVPFDKLVKEKMRFKKGMVVEWYDEAVKAGRLDKNWWKILPDNTAYPQN.

An N-terminal signal peptide occupies residues 1 to 16; the sequence is MKKNTIILVGALIAIA. Histidine 102 contacts heme c. Cysteine 130, cysteine 133, and lysine 134 together coordinate heme. Residues cysteine 168, cysteine 171, histidine 172, cysteine 210, cysteine 213, and histidine 214 each coordinate heme c. Ca(2+)-binding residues include glutamate 216, tyrosine 217, lysine 273, and glutamine 275. Tyrosine 217 is a binding site for substrate. Histidine 276 contributes to the substrate binding site. Heme c contacts are provided by histidine 287, cysteine 294, cysteine 297, histidine 298, histidine 312, cysteine 325, cysteine 328, histidine 329, and histidine 404.

This sequence belongs to the cytochrome c-552 family. The cofactor is Ca(2+). Heme c is required as a cofactor.

The protein localises to the periplasm. It catalyses the reaction 6 Fe(III)-[cytochrome c] + NH4(+) + 2 H2O = 6 Fe(II)-[cytochrome c] + nitrite + 8 H(+). It participates in nitrogen metabolism; nitrate reduction (assimilation). Catalyzes the reduction of nitrite to ammonia, consuming six electrons in the process. The polypeptide is Cytochrome c-552 (Maridesulfovibrio salexigens (strain ATCC 14822 / DSM 2638 / NCIMB 8403 / VKM B-1763) (Desulfovibrio salexigens)).